The following is a 280-amino-acid chain: Urease accessory protein UreD (280 aa).

It belongs to the UreD family. As to quaternary structure, ureD, UreF and UreG form a complex that acts as a GTP-hydrolysis-dependent molecular chaperone, activating the urease apoprotein by helping to assemble the nickel containing metallocenter of UreC. The UreE protein probably delivers the nickel.

It is found in the cytoplasm. In terms of biological role, required for maturation of urease via the functional incorporation of the urease nickel metallocenter. The chain is Urease accessory protein UreD from Vibrio parahaemolyticus.